The primary structure comprises 158 residues: SUMO-conjugating enzyme UBC9 (158 aa).

Residues 4–157 enclose the UBC core domain; sequence IALSRLAQER…VRAQAKKFAP (154 aa). Residues 13-18 are interaction with SUMO1; it reads RKAWRK. The Glycyl thioester intermediate role is filled by C93.

The protein belongs to the ubiquitin-conjugating enzyme family. As to quaternary structure, interacts with SOX9.

The protein localises to the nucleus. It localises to the cytoplasm. It participates in protein modification; protein sumoylation. Functionally, accepts the ubiquitin-like proteins SUMO1, SUMO2 and SUMO3 from the UBLE1A-UBLE1B E1 complex and catalyzes their covalent attachment to other proteins with the help of an E3 ligase such as RANBP2 or CBX4. Essential for nuclear architecture and chromosome segregation. In Gallus gallus (Chicken), this protein is SUMO-conjugating enzyme UBC9 (UBE2I).